Reading from the N-terminus, the 72-residue chain is Defensin-like protein 230 (72 aa).

Positions 1–27 are cleaved as a signal peptide; it reads MEKKSLACLSFLLLVLFVAQEIVVSEA. 4 cysteine pairs are disulfide-bonded: Cys30–Cys72, Cys41–Cys60, Cys45–Cys66, and Cys49–Cys68.

It belongs to the DEFL family.

It localises to the secreted. The chain is Defensin-like protein 230 (PI230) from Pisum sativum (Garden pea).